A 540-amino-acid chain; its full sequence is 2,3-bisphosphoglycerate-independent phosphoglycerate mutase (540 aa).

Mn(2+) is bound by residues Asp-13 and Ser-63. Ser-63 serves as the catalytic Phosphoserine intermediate. Substrate-binding positions include His-124, 154–155 (RD), Arg-186, Arg-192, 262–265 (RPDR), and Lys-356. The Mn(2+) site is built by Asp-423, His-427, Asp-464, His-465, and His-483.

This sequence belongs to the BPG-independent phosphoglycerate mutase family. Monomer. Mn(2+) is required as a cofactor.

It catalyses the reaction (2R)-2-phosphoglycerate = (2R)-3-phosphoglycerate. The protein operates within carbohydrate degradation; glycolysis; pyruvate from D-glyceraldehyde 3-phosphate: step 3/5. Functionally, catalyzes the interconversion of 2-phosphoglycerate and 3-phosphoglycerate. The sequence is that of 2,3-bisphosphoglycerate-independent phosphoglycerate mutase from Chloroflexus aggregans (strain MD-66 / DSM 9485).